The following is a 353-amino-acid chain: Photosystem II protein D1 (353 aa).

N-acetylthreonine is present on Thr2. The residue at position 2 (Thr2) is a Phosphothreonine. Transmembrane regions (helical) follow at residues 29–46 (YIGW…TATS), 118–133 (HFLL…EWEL), and 142–156 (WIAV…AATA). His118 provides a ligand contact to chlorophyll a. Tyr126 provides a ligand contact to pheophytin a. 2 residues coordinate [CaMn4O5] cluster: Asp170 and Glu189. A helical membrane pass occupies residues 197–218 (FHMLGVAGVFGGSLFSAMHGSL). His198 lines the chlorophyll a pocket. A quinone contacts are provided by residues His215 and 264-265 (SF). His215 is a Fe cation binding site. His272 contacts Fe cation. Residues 274–288 (FLAAWPVVGIWFTAL) form a helical membrane-spanning segment. [CaMn4O5] cluster-binding residues include His332, Glu333, Asp342, and Ala344. Positions 345–353 (AVEANSIDG) are excised as a propeptide.

The protein belongs to the reaction center PufL/M/PsbA/D family. As to quaternary structure, PSII is composed of 1 copy each of membrane proteins PsbA, PsbB, PsbC, PsbD, PsbE, PsbF, PsbH, PsbI, PsbJ, PsbK, PsbL, PsbM, PsbT, PsbX, PsbY, PsbZ, Psb30/Ycf12, at least 3 peripheral proteins of the oxygen-evolving complex and a large number of cofactors. It forms dimeric complexes. The cofactor is The D1/D2 heterodimer binds P680, chlorophylls that are the primary electron donor of PSII, and subsequent electron acceptors. It shares a non-heme iron and each subunit binds pheophytin, quinone, additional chlorophylls, carotenoids and lipids. D1 provides most of the ligands for the Mn4-Ca-O5 cluster of the oxygen-evolving complex (OEC). There is also a Cl(-1) ion associated with D1 and D2, which is required for oxygen evolution. The PSII complex binds additional chlorophylls, carotenoids and specific lipids.. Tyr-161 forms a radical intermediate that is referred to as redox-active TyrZ, YZ or Y-Z. Post-translationally, C-terminally processed by CTPA; processing is essential to allow assembly of the oxygen-evolving complex and thus photosynthetic growth.

The protein resides in the plastid. It is found in the chloroplast thylakoid membrane. The enzyme catalyses 2 a plastoquinone + 4 hnu + 2 H2O = 2 a plastoquinol + O2. Functionally, photosystem II (PSII) is a light-driven water:plastoquinone oxidoreductase that uses light energy to abstract electrons from H(2)O, generating O(2) and a proton gradient subsequently used for ATP formation. It consists of a core antenna complex that captures photons, and an electron transfer chain that converts photonic excitation into a charge separation. The D1/D2 (PsbA/PsbD) reaction center heterodimer binds P680, the primary electron donor of PSII as well as several subsequent electron acceptors. This Cryptomeria japonica (Japanese cedar) protein is Photosystem II protein D1.